The primary structure comprises 385 residues: MVHQSEMENYNIGQASIEEVSDPAYKGAKIVVVGVGGGGSNMIKHLVEYGVHQDVTPIATNTDGQHLKNNPAPVKILLGKESTGGLGAGGVPDIGKKAAEESADEIREAIKDAKLVIVSTGLGGGTGTGATPTIVKIAKEVGALTIAIVTKPFKYEGNQKRKRAEEGLKELEQSSDSILVIPNDKILLTMKKNASTTECYREVDDVLVRAVSGISTIITKPGNINVDFADLKSALGFKGFALMGIGEATGEDSAKLAVQNAIQSPLLDDASIEGAKSIIVFFEHHPDYPMMAYSQACDFIQDQAHQDVDVKFGQHTSENIPIDHVRVTIIATGSERNSNGAGLESIATPSQPVVKPTRKVGNGEYLRIPTEEELSIPTTIRIQQD.

GTP contacts are provided by residues 37 to 41 (GGGSN), 125 to 127 (GTG), E156, K160, and D204.

Belongs to the FtsZ family. As to quaternary structure, homodimer. Polymerizes to form a dynamic ring structure in a strictly GTP-dependent manner. Interacts directly with several other division proteins.

It localises to the cytoplasm. Its function is as follows. Essential cell division protein that forms a contractile ring structure (Z ring) at the future cell division site. The regulation of the ring assembly controls the timing and the location of cell division. One of the functions of the FtsZ ring is to recruit other cell division proteins to the septum to produce a new cell wall between the dividing cells. Binds GTP and shows GTPase activity. The chain is Cell division protein FtsZ from Helicobacter pylori (strain J99 / ATCC 700824) (Campylobacter pylori J99).